We begin with the raw amino-acid sequence, 83 residues long: Putative defensin-like protein 257 (83 aa).

The first 25 residues, 1–25 (MMNVSLKLSFLVFILVIMSNLGSEA), serve as a signal peptide directing secretion. 3 disulfide bridges follow: Cys-57–Cys-73, Cys-63–Cys-80, and Cys-67–Cys-82.

It belongs to the DEFL family.

The protein localises to the secreted. This Arabidopsis thaliana (Mouse-ear cress) protein is Putative defensin-like protein 257.